We begin with the raw amino-acid sequence, 150 residues long: Catabolic 3-dehydroquinase 1 (150 aa).

Y24 functions as the Proton acceptor in the catalytic mechanism. Substrate-binding residues include N75, H81, and D88. The active-site Proton donor is the H101. Substrate is bound by residues 102–103 and R112; that span reads VS.

The protein belongs to the type-II 3-dehydroquinase family. In terms of assembly, homododecamer. Adopts a ring-like structure, composed of an arrangement of two hexameric rings stacked on top of one another.

It carries out the reaction 3-dehydroquinate = 3-dehydroshikimate + H2O. The protein operates within aromatic compound metabolism; 3,4-dihydroxybenzoate biosynthesis; 3,4-dihydroxybenzoate from 3-dehydroquinate: step 1/2. In terms of biological role, is involved in the catabolism of quinate. Allows the utilization of quinate as carbon source via the beta-ketoadipate pathway. The protein is Catabolic 3-dehydroquinase 1 of Aspergillus fumigatus (strain ATCC MYA-4609 / CBS 101355 / FGSC A1100 / Af293) (Neosartorya fumigata).